Consider the following 373-residue polypeptide: Lipoyl synthase (373 aa).

Residues His-12–Ile-36 are disordered. Residues Cys-81, Cys-86, Cys-92, Cys-107, Cys-111, Cys-114, and Ser-323 each contribute to the [4Fe-4S] cluster site. In terms of domain architecture, Radical SAM core spans Phe-93 to Ser-312. Residues Pro-346–Arg-373 form a disordered region. Polar residues predominate over residues Ala-360–Arg-373.

This sequence belongs to the radical SAM superfamily. Lipoyl synthase family. [4Fe-4S] cluster is required as a cofactor.

It is found in the cytoplasm. It carries out the reaction [[Fe-S] cluster scaffold protein carrying a second [4Fe-4S](2+) cluster] + N(6)-octanoyl-L-lysyl-[protein] + 2 oxidized [2Fe-2S]-[ferredoxin] + 2 S-adenosyl-L-methionine + 4 H(+) = [[Fe-S] cluster scaffold protein] + N(6)-[(R)-dihydrolipoyl]-L-lysyl-[protein] + 4 Fe(3+) + 2 hydrogen sulfide + 2 5'-deoxyadenosine + 2 L-methionine + 2 reduced [2Fe-2S]-[ferredoxin]. It functions in the pathway protein modification; protein lipoylation via endogenous pathway; protein N(6)-(lipoyl)lysine from octanoyl-[acyl-carrier-protein]: step 2/2. In terms of biological role, catalyzes the radical-mediated insertion of two sulfur atoms into the C-6 and C-8 positions of the octanoyl moiety bound to the lipoyl domains of lipoate-dependent enzymes, thereby converting the octanoylated domains into lipoylated derivatives. The chain is Lipoyl synthase from Xylella fastidiosa (strain M12).